We begin with the raw amino-acid sequence, 370 residues long: Glutamate 5-kinase (370 aa).

ATP is bound at residue K17. Substrate is bound by residues S57, D144, and N156. Residues 176–177 (SD) and 220–226 (TGGMASK) each bind ATP. The PUA domain occupies 282–360 (AGALTLDDGA…HELPVEMRRP (79 aa)).

It belongs to the glutamate 5-kinase family.

It localises to the cytoplasm. The enzyme catalyses L-glutamate + ATP = L-glutamyl 5-phosphate + ADP. Its pathway is amino-acid biosynthesis; L-proline biosynthesis; L-glutamate 5-semialdehyde from L-glutamate: step 1/2. In terms of biological role, catalyzes the transfer of a phosphate group to glutamate to form L-glutamate 5-phosphate. The polypeptide is Glutamate 5-kinase (Mycolicibacterium smegmatis (strain ATCC 700084 / mc(2)155) (Mycobacterium smegmatis)).